A 241-amino-acid polypeptide reads, in one-letter code: MSDKTPRYSRILLKLSGEALAGTKDMGIDTEVLDKMSLSIAHLRGLGVQVGIVVGGGNLYRGAQLQKEGLVGRVTGDQMGMLATVMNGLAMRDALERRNIKTRLMSALPIGEVTESYSSRNAIRYLKNGEVCIFVAGTGNPFFTTDTAACLRGIEIEAGLILKATKVDGVYDKDPSLHSDAVKYDGLTFDEVLEQKLGVMDLTAIALCREHDVPLQVFDMNKPNALLNVVMGENEGTRVYH.

Residue 14 to 17 (KLSG) participates in ATP binding. UMP is bound at residue glycine 56. ATP is bound by residues glycine 57 and arginine 61. Residues aspartate 77 and 138 to 145 (TGNPFFTT) contribute to the UMP site. ATP-binding residues include threonine 165, tyrosine 171, and aspartate 174.

This sequence belongs to the UMP kinase family. Homohexamer.

The protein localises to the cytoplasm. It carries out the reaction UMP + ATP = UDP + ADP. The protein operates within pyrimidine metabolism; CTP biosynthesis via de novo pathway; UDP from UMP (UMPK route): step 1/1. Inhibited by UTP. Its function is as follows. Catalyzes the reversible phosphorylation of UMP to UDP. This is Uridylate kinase from Psychrobacter arcticus (strain DSM 17307 / VKM B-2377 / 273-4).